Consider the following 406-residue polypeptide: MISLNSIFLLSLVGLSRAAPSRSETSPDRTIKPRAACTPTAGGSSSTDDVPAIQEAITSCGDGGIIIIPADTTYYLNSVLDFKGCSNCDFQVEGLLQFTSSTDYWNGKTAMITVSDIDGLKLRSVTGSGVIDGNGQESWDKFAEDSSYKRPTLLYITGGSNIEVSGLRQKNPPNVFISVKGDTSNAQFTSLTMDATSNSDNLPKNTDAFDIGASTYVTISSVAITNDDDCVAFKPGANYVTVENVSCTGSHGISVGSLGKSSDDTVQNVYARNITMINSSKAAGIKTYPSGGDHGLSTVKNATFEDFIVDGCDYAFQIQSCYGEDDTYCEENPGDAVLEGIVVKGFTGTTSDKEDPVVANLNCGSKGTCDVTISGFEVKAPSGDAKILCGNTPSDLGVTCSSGASG.

Positions 1–18 (MISLNSIFLLSLVGLSRA) are cleaved as a signal peptide. The interval 20 to 49 (PSRSETSPDRTIKPRAACTPTAGGSSSTDD) is disordered. PbH1 repeat units follow at residues 183 to 213 (TSNA…DIGA), 214 to 235 (STYV…AFKP), 237 to 257 (ANYV…SVGS), 266 to 289 (VQNV…KTYP), 299 to 320 (VKNA…QIQS), and 368 to 390 (TCDV…ILCG). Residue Asp228 is the Proton donor of the active site. A glycan (N-linked (GlcNAc...) asparagine) is linked at Asn244. His251 is an active-site residue. N-linked (GlcNAc...) asparagine glycosylation is found at Asn273, Asn278, and Asn301.

This sequence belongs to the glycosyl hydrolase 28 family.

Its subcellular location is the secreted. Its function is as follows. Pectinolytic enzyme involved in the degradation of xylogalacturonan (xga), a galacturonan backbone heavily substituted with xylose, and which is one important component of the hairy regions of pectin. Activity requires a galacturonic acid backbone substituted with xylose. This Aspergillus oryzae (strain ATCC 42149 / RIB 40) (Yellow koji mold) protein is Probable endo-xylogalacturonan hydrolase A (xghA).